Reading from the N-terminus, the 206-residue chain is LexA repressor (206 aa).

Residues Val-28–Ser-48 constitute a DNA-binding region (H-T-H motif). Catalysis depends on for autocatalytic cleavage activity residues Ser-129 and Lys-167.

It belongs to the peptidase S24 family. In terms of assembly, homodimer.

It catalyses the reaction Hydrolysis of Ala-|-Gly bond in repressor LexA.. Functionally, represses a number of genes involved in the response to DNA damage (SOS response), including recA and lexA. In the presence of single-stranded DNA, RecA interacts with LexA causing an autocatalytic cleavage which disrupts the DNA-binding part of LexA, leading to derepression of the SOS regulon and eventually DNA repair. This is LexA repressor from Staphylococcus epidermidis (strain ATCC 35984 / DSM 28319 / BCRC 17069 / CCUG 31568 / BM 3577 / RP62A).